Consider the following 312-residue polypeptide: Malate dehydrogenase (312 aa).

NAD(+) contacts are provided by residues 7-13 (GAAGGIG) and aspartate 34. Substrate is bound by residues arginine 81 and arginine 87. NAD(+) contacts are provided by residues asparagine 94 and 117 to 119 (ITN). Substrate-binding residues include asparagine 119 and arginine 153. The active-site Proton acceptor is the histidine 177. Residue methionine 227 participates in NAD(+) binding.

Belongs to the LDH/MDH superfamily. MDH type 1 family. In terms of assembly, homodimer.

It catalyses the reaction (S)-malate + NAD(+) = oxaloacetate + NADH + H(+). Functionally, catalyzes the reversible oxidation of malate to oxaloacetate. This chain is Malate dehydrogenase (mdh), found in Klebsiella pneumoniae subsp. pneumoniae (strain ATCC 700721 / MGH 78578).